Consider the following 473-residue polypeptide: H(+)/Cl(-) exchange transporter ClcA (473 aa).

At 1 to 32 (MKTDTPSLETPQAARLRRRQLIRQLLERDKTP) the chain is on the cytoplasmic side. The chain crosses the membrane as a helical span at residues 33–69 (LAILFMAAVVGTLVGLAAVAFDKGVAWLQNQRMGALV). Residues 70 to 76 (HTADNYP) are Periplasmic-facing. Residues 77–100 (LLLTVAFLCSAVLAMFGYFLVRKY) form a helical membrane-spanning segment. The short motif at 106–110 (GSGIP) is the Selectivity filter part_1 element. Ser107 is a binding site for chloride. An intramembrane region (helical) is located at residues 109–116 (IPEIEGAL). At 117–123 (EDQRPVR) the chain is on the cytoplasmic side. 2 consecutive transmembrane segments (helical) span residues 124-141 (WWRVLPVKFFGGLGTLGG) and 148-166 (EGPTVQIGGNIGRMVLDVF). Positions 146–150 (GREGP) match the Selectivity filter part_2 motif. Residues 167 to 176 (RLKGDEARHT) are Cytoplasmic-facing. Intramembrane regions (helical) lie at residues 177 to 189 (LLATGAAAGLAAA) and 193 to 201 (PLAGILFII). Residues 202–214 (EEMRPQFRYTLIS) are Cytoplasmic-facing. The chain crosses the membrane as a helical span at residues 215–232 (IKAVFIGVIMSTIMYRIF). At 233–252 (NHEVALIDVGKLSDAPLNTL) the chain is on the periplasmic side. The helical transmembrane segment at 253–281 (WLYLILGIIFGIFGPIFNKWVLGMQDLLH) threads the bilayer. Over 282-287 (RVHGGN) the chain is Cytoplasmic. Residues 288 to 309 (ITKWVLMGGAIGGLCGLLGFVA) form a helical membrane-spanning segment. The Periplasmic segment spans residues 310-329 (PATSGGGFNLIPIATAGNFS). The next 2 helical transmembrane spans lie at 330–349 (MGMLVFIFVARVITTLLCFS) and 355–376 (GIFAPMLALGTVLGTAFGMVAV). Residues 355–359 (GIFAP) carry the Selectivity filter part_3 motif. Chloride contacts are provided by Ile356 and Phe357. Residues 377 to 386 (ELFPQYHLEA) lie on the Periplasmic side of the membrane. Residues 387 to 401 (GTFAIAGMGALLAAS) constitute an intramembrane region (helical). Positions 402 to 404 (IRA) form an intramembrane region, note=Loop between two helices. Residues 405 to 416 (PLTGIILVLEMT) constitute an intramembrane region (helical). The segment at residues 417–421 (DNYQL) is an intramembrane region (note=Loop between two helices). Residues 422–438 (ILPMIITGLGATLLAQF) form a helical membrane-spanning segment. Residues 439–473 (TGGKPLYSAILARTLAKQEAEQLARSKAASASENT) lie on the Cytoplasmic side of the membrane. Tyr445 contacts chloride.

It belongs to the chloride channel (TC 2.A.49) family. ClcA subfamily. In terms of assembly, homodimer.

The protein resides in the cell inner membrane. The catalysed reaction is 2 chloride(in) + H(+)(out) = 2 chloride(out) + H(+)(in). In terms of biological role, proton-coupled chloride transporter. Functions as antiport system and exchanges two chloride ions for 1 proton. Probably acts as an electrical shunt for an outwardly-directed proton pump that is linked to amino acid decarboxylation, as part of the extreme acid resistance (XAR) response. This is H(+)/Cl(-) exchange transporter ClcA from Escherichia coli O157:H7.